Reading from the N-terminus, the 303-residue chain is Acetylglutamate kinase (303 aa).

Residues 75 to 76 (GG), R97, and N194 contribute to the substrate site.

Belongs to the acetylglutamate kinase family. ArgB subfamily.

It is found in the cytoplasm. It catalyses the reaction N-acetyl-L-glutamate + ATP = N-acetyl-L-glutamyl 5-phosphate + ADP. Its pathway is amino-acid biosynthesis; L-arginine biosynthesis; N(2)-acetyl-L-ornithine from L-glutamate: step 2/4. In terms of biological role, catalyzes the ATP-dependent phosphorylation of N-acetyl-L-glutamate. The polypeptide is Acetylglutamate kinase (Gloeobacter violaceus (strain ATCC 29082 / PCC 7421)).